The primary structure comprises 469 residues: ATP-dependent protease ATPase subunit HslU (469 aa).

ATP-binding positions include isoleucine 24, 66-71 (GVGKTE), aspartate 282, glutamate 347, and arginine 419.

It belongs to the ClpX chaperone family. HslU subfamily. In terms of assembly, a double ring-shaped homohexamer of HslV is capped on each side by a ring-shaped HslU homohexamer. The assembly of the HslU/HslV complex is dependent on binding of ATP.

It is found in the cytoplasm. In terms of biological role, ATPase subunit of a proteasome-like degradation complex; this subunit has chaperone activity. The binding of ATP and its subsequent hydrolysis by HslU are essential for unfolding of protein substrates subsequently hydrolyzed by HslV. HslU recognizes the N-terminal part of its protein substrates and unfolds these before they are guided to HslV for hydrolysis. In Listeria monocytogenes serotype 4a (strain HCC23), this protein is ATP-dependent protease ATPase subunit HslU.